A 305-amino-acid chain; its full sequence is MDKIPVETLIKDLNLEVIVEAKNNKIDITTSDVNRPGLQFSGFYEHFAYERVQIIGKVETTFIEQLPDDVLAERADRFFNYPIPCLIVTRDLNIRQEIIDAAQKHDRYLLRTKEASTKFINRLINYLDEKLAPQITIHGDLVDVYGIGVLLLGESGIGKSETALELIKRGHRLVADDAVEISKISEDKLQGSSPEIIRHFIEIRGIGILDIKTLYGVGSVRNSMNIDLVIQLEEWDEDKYYDRLGLEDDYIKFLDVKVPKLTIPVRPGRNLAIIVEVAAMNHRQKQMGYNAAHELNKKLLKQIGN.

Catalysis depends on residues histidine 138 and lysine 159. ATP is bound at residue 153 to 160 (GESGIGKS). Serine 160 serves as a coordination point for Mg(2+). The active-site Proton acceptor; for phosphorylation activity. Proton donor; for dephosphorylation activity is the aspartate 177. Residues 201–210 (IEIRGIGILD) form an important for the catalytic mechanism of both phosphorylation and dephosphorylation region. Residue glutamate 202 coordinates Mg(2+). Residue arginine 243 is part of the active site. Positions 264 to 269 (PVRPGR) are important for the catalytic mechanism of dephosphorylation.

The protein belongs to the HPrK/P family. As to quaternary structure, homohexamer. Mg(2+) serves as cofactor.

It carries out the reaction [HPr protein]-L-serine + ATP = [HPr protein]-O-phospho-L-serine + ADP + H(+). It catalyses the reaction [HPr protein]-O-phospho-L-serine + phosphate + H(+) = [HPr protein]-L-serine + diphosphate. In terms of biological role, catalyzes the ATP- as well as the pyrophosphate-dependent phosphorylation of a specific serine residue in HPr, a phosphocarrier protein of the phosphoenolpyruvate-dependent sugar phosphotransferase system (PTS). HprK/P also catalyzes the pyrophosphate-producing, inorganic phosphate-dependent dephosphorylation (phosphorolysis) of seryl-phosphorylated HPr (P-Ser-HPr). The two antagonistic activities of HprK/P are regulated by several intracellular metabolites, which change their concentration in response to the absence or presence of rapidly metabolisable carbon sources (glucose, fructose, etc.) in the growth medium. Therefore, by controlling the phosphorylation state of HPr, HPrK/P is a sensor enzyme that plays a major role in the regulation of carbon metabolism and sugar transport: it mediates carbon catabolite repression (CCR), and regulates PTS-catalyzed carbohydrate uptake and inducer exclusion. This is HPr kinase/phosphorylase from Thermoanaerobacter pseudethanolicus (strain ATCC 33223 / 39E) (Clostridium thermohydrosulfuricum).